The primary structure comprises 258 residues: Regulatory protein RecX (258 aa).

Belongs to the RecX family.

It localises to the cytoplasm. Modulates RecA activity. This is Regulatory protein RecX from Streptococcus gordonii (strain Challis / ATCC 35105 / BCRC 15272 / CH1 / DL1 / V288).